We begin with the raw amino-acid sequence, 483 residues long: Bromoperoxidase-catalase (483 aa).

Positions 1–24 (MTQGPLTTEAGAPVADNQNSETAG) are disordered. Catalysis depends on residues H54 and N127. Y337 contributes to the heme binding site.

The protein belongs to the catalase family.

The catalysed reaction is 2 H2O2 = O2 + 2 H2O. The sequence is that of Bromoperoxidase-catalase (bca) from Streptomyces venezuelae (strain ATCC 10712 / CBS 650.69 / DSM 40230 / JCM 4526 / NBRC 13096 / PD 04745).